We begin with the raw amino-acid sequence, 383 residues long: Succinate--CoA ligase [ADP-forming] subunit beta 2 (383 aa).

In terms of domain architecture, ATP-grasp spans 9–231 (RELFKEHGIV…QEDADSLEAR (223 aa)). ATP-binding positions include lysine 45, 52-54 (GRG), cysteine 94, and glutamate 99. Mg(2+) contacts are provided by asparagine 187 and aspartate 201. Residues asparagine 251 and 308-310 (GIT) each bind substrate.

It belongs to the succinate/malate CoA ligase beta subunit family. Heterotetramer of two alpha and two beta subunits. Mg(2+) serves as cofactor.

It catalyses the reaction succinate + ATP + CoA = succinyl-CoA + ADP + phosphate. The catalysed reaction is GTP + succinate + CoA = succinyl-CoA + GDP + phosphate. It functions in the pathway carbohydrate metabolism; tricarboxylic acid cycle; succinate from succinyl-CoA (ligase route): step 1/1. Its function is as follows. Succinyl-CoA synthetase functions in the citric acid cycle (TCA), coupling the hydrolysis of succinyl-CoA to the synthesis of either ATP or GTP and thus represents the only step of substrate-level phosphorylation in the TCA. The beta subunit provides nucleotide specificity of the enzyme and binds the substrate succinate, while the binding sites for coenzyme A and phosphate are found in the alpha subunit. The protein is Succinate--CoA ligase [ADP-forming] subunit beta 2 of Streptomyces coelicolor (strain ATCC BAA-471 / A3(2) / M145).